The primary structure comprises 308 residues: GDP-L-colitose synthase (308 aa).

Residues 7–13 and 101–104 contribute to the NADP(+) site; these read GAGGMVG and LGSS. Tyrosine 132 serves as the catalytic Proton donor/acceptor. NADP(+) is bound by residues lysine 136, 160–163, and histidine 176; that span reads PCNL. Residues lysine 184, tryptophan 199, and arginine 206 each coordinate substrate.

The protein belongs to the NAD(P)-dependent epimerase/dehydratase family. Fucose synthase subfamily. As to quaternary structure, homodimer.

The enzyme catalyses GDP-beta-L-colitose + NAD(+) = GDP-4-dehydro-3,6-dideoxy-alpha-D-mannose + NADH + H(+). It catalyses the reaction GDP-beta-L-colitose + NADP(+) = GDP-4-dehydro-3,6-dideoxy-alpha-D-mannose + NADPH + H(+). It participates in nucleotide-sugar metabolism; GDP-L-colitose biosynthesis. Its function is as follows. Involved in the biosynthesis of the L-colitose (3,6-dideoxyl-L-xylo-hexose) present in the O-antigen region of lipopolysaccharides (LPS) where it serves as antigenic determinant and are vital for bacterial defense and survival. Catalyzes the two-step NADP-dependent conversion of GDP-4-keto-3,6-dideoxy-D-mannose to GDP-L-colitose. ColC is a bifunctional enzyme catalyzing the C-5 epimerization of GDP-4-keto-3,6-dideoxy-D-mannose and the subsequent C-4 keto reduction of the resulting L-epimer to give GDP-L-colitose. It can use both NADP(+) and NAD(+) as electron acceptor, with a slight preference for NADP(+). The sequence is that of GDP-L-colitose synthase from Yersinia pseudotuberculosis.